A 58-amino-acid chain; its full sequence is Photosystem II reaction center protein K (58 aa).

The propeptide occupies 1–21; sequence MTVSYSIYLENSLHFGDALLA. Residues 29-49 traverse the membrane as a helical segment; it reads IFDPIVDVMPVIPVFFLLLAF.

Belongs to the PsbK family. In terms of assembly, PSII is composed of 1 copy each of membrane proteins PsbA, PsbB, PsbC, PsbD, PsbE, PsbF, PsbH, PsbI, PsbJ, PsbK, PsbL, PsbM, PsbT, PsbX, PsbY, PsbZ, Psb30/Ycf12, at least 3 peripheral proteins of the oxygen-evolving complex and a large number of cofactors. It forms dimeric complexes.

It is found in the plastid. The protein resides in the chloroplast thylakoid membrane. One of the components of the core complex of photosystem II (PSII). PSII is a light-driven water:plastoquinone oxidoreductase that uses light energy to abstract electrons from H(2)O, generating O(2) and a proton gradient subsequently used for ATP formation. It consists of a core antenna complex that captures photons, and an electron transfer chain that converts photonic excitation into a charge separation. The polypeptide is Photosystem II reaction center protein K (Adiantum capillus-veneris (Maidenhair fern)).